The primary structure comprises 349 residues: Putative phytanoyl-CoA dioxygenase (349 aa).

2-oxoglutarate-binding positions include Lys-118 and 169 to 171; that span reads HLD. Positions 169 and 171 each coordinate Fe cation.

The protein belongs to the PhyH family. The cofactor is Fe cation. L-ascorbate serves as cofactor.

The catalysed reaction is phytanoyl-CoA + 2-oxoglutarate + O2 = 2-hydroxyphytanoyl-CoA + succinate + CO2. The protein operates within lipid metabolism; fatty acid metabolism. Converts phytanoyl-CoA to 2-hydroxyphytanoyl-CoA. This is Putative phytanoyl-CoA dioxygenase from Dictyostelium discoideum (Social amoeba).